The chain runs to 344 residues: Phosphoribosylformylglycinamidine cyclo-ligase (344 aa).

The protein belongs to the AIR synthase family.

The protein resides in the cytoplasm. The enzyme catalyses 2-formamido-N(1)-(5-O-phospho-beta-D-ribosyl)acetamidine + ATP = 5-amino-1-(5-phospho-beta-D-ribosyl)imidazole + ADP + phosphate + H(+). Its pathway is purine metabolism; IMP biosynthesis via de novo pathway; 5-amino-1-(5-phospho-D-ribosyl)imidazole from N(2)-formyl-N(1)-(5-phospho-D-ribosyl)glycinamide: step 2/2. This Laribacter hongkongensis (strain HLHK9) protein is Phosphoribosylformylglycinamidine cyclo-ligase.